A 443-amino-acid chain; its full sequence is Glutamyl-tRNA reductase (443 aa).

Substrate is bound by residues 49–52 (TCNR), serine 109, 114–116 (ETQ), and glutamine 120. Cysteine 50 serves as the catalytic Nucleophile. 189–194 (GAGDMS) is an NADP(+) binding site.

Belongs to the glutamyl-tRNA reductase family. In terms of assembly, homodimer.

The enzyme catalyses (S)-4-amino-5-oxopentanoate + tRNA(Glu) + NADP(+) = L-glutamyl-tRNA(Glu) + NADPH + H(+). Its pathway is porphyrin-containing compound metabolism; protoporphyrin-IX biosynthesis; 5-aminolevulinate from L-glutamyl-tRNA(Glu): step 1/2. In terms of biological role, catalyzes the NADPH-dependent reduction of glutamyl-tRNA(Glu) to glutamate 1-semialdehyde (GSA). This is Glutamyl-tRNA reductase from Staphylococcus saprophyticus subsp. saprophyticus (strain ATCC 15305 / DSM 20229 / NCIMB 8711 / NCTC 7292 / S-41).